The following is an 853-amino-acid chain: Translation initiation factor IF-2 (853 aa).

Disordered regions lie at residues 1–68 and 94–265; these read MSDT…ASDG and LEQR…DKTS. Over residues 20–32 the composition is skewed to polar residues; sequence RKTSGTVKQSFSH. Over residues 94–161 the composition is skewed to basic and acidic residues; that stretch reads LEQRKAEEAS…ASREAVERPS (68 aa). Residues 163–176 show a composition bias toward low complexity; it reads APRAAPAAQTPPAA. 2 stretches are compositionally biased toward basic and acidic residues: residues 196-219 and 245-265; these read PARDDRADRAREVATKPSRGDAER and RARERERERRVGGGDSNDKTS. Residues 347-515 form the tr-type G domain; the sequence is PRAPIVTIMG…AISIQAEILE (169 aa). The segment at 356–363 is G1; that stretch reads GHVDHGKT. Residue 356–363 coordinates GTP; sequence GHVDHGKT. Residues 381 to 385 are G2; sequence GITQH. The tract at residues 403-406 is G3; the sequence is DTPG. GTP-binding positions include 403–407 and 457–460; these read DTPGH and TKSD. The tract at residues 457–460 is G4; sequence TKSD. Residues 493 to 495 form a G5 region; that stretch reads SAK.

This sequence belongs to the TRAFAC class translation factor GTPase superfamily. Classic translation factor GTPase family. IF-2 subfamily.

Its subcellular location is the cytoplasm. In terms of biological role, one of the essential components for the initiation of protein synthesis. Protects formylmethionyl-tRNA from spontaneous hydrolysis and promotes its binding to the 30S ribosomal subunits. Also involved in the hydrolysis of GTP during the formation of the 70S ribosomal complex. This is Translation initiation factor IF-2 from Hyphomonas neptunium (strain ATCC 15444).